Consider the following 273-residue polypeptide: Small ribosomal subunit protein uS2 (273 aa).

The segment at 244-273 (SDEEANSSAEENENRQEDLLAKKYDSSEAN) is disordered. Residues 255-273 (NENRQEDLLAKKYDSSEAN) are compositionally biased toward basic and acidic residues.

It belongs to the universal ribosomal protein uS2 family.

This chain is Small ribosomal subunit protein uS2, found in Chlamydia felis (strain Fe/C-56) (Chlamydophila felis).